The following is a 369-amino-acid chain: Secondary metabolism regulator laeA (369 aa).

The segment at 1–37 is disordered; it reads MFGNGQTGQRLPAMASPPHDSYYSQSLASSRSRNNSD. Residues 20 to 37 show a composition bias toward low complexity; it reads DSYYSQSLASSRSRNNSD.

The protein belongs to the methyltransferase superfamily. LaeA methyltransferase family. Component of the heterotrimeric velvet complex composed of laeA, veA and velB; VeA acting as a bridging protein between laeA and velB. Interacts directly with veA.

The protein resides in the nucleus. It carries out the reaction L-methionyl-[protein] + S-adenosyl-L-methionine = S-methyl-L-methionyl-[protein] + S-adenosyl-L-homocysteine. Methyltransferase that performs automethylation. No other methyl-accepting substrate has been identified yet. Component of the velvet transcription factor complex that acts as a global regulator for secondary metabolite gene expression. Required for aflR expression and subsequent aflatoxin production. Negatively regulates veA expression. Controls conidiophore and conidial development. Required for hydrophobin production which plays a role in cell surface hydrophobicity and host defense escape. This chain is Secondary metabolism regulator laeA, found in Aspergillus flavus (strain ATCC 200026 / FGSC A1120 / IAM 13836 / NRRL 3357 / JCM 12722 / SRRC 167).